Consider the following 207-residue polypeptide: UPF0126 inner membrane protein YadS (207 aa).

Residues 1 to 21 (MLVYWLDIVGTAVFAISGVLL) traverse the membrane as a helical segment. Residues 22 to 29 (AGKLRMDP) are Cytoplasmic-facing. Residues 30-50 (FGVLVLGVVTAVGGGTIRDMA) form a helical membrane-spanning segment. The Periplasmic segment spans residues 51–58 (LDHGPVFW). Residues 59-79 (VKDPTDLVVAMVTSMLTIVLV) form a helical membrane-spanning segment. Topologically, residues 80 to 85 (RQPRRL) are cytoplasmic. Residues 86 to 106 (PKWMLPVLDAVGLAVFVGIGV) form a helical membrane-spanning segment. At 107-112 (NKAFNA) the chain is on the periplasmic side. Residues 113 to 133 (EAGPLIAVCMGVITGVGGGII) form a helical membrane-spanning segment. Over 134–148 (RDVLAREIPMILRTE) the chain is Cytoplasmic. Residues 149–169 (IYATACIIGGIVHATAYYTFS) traverse the membrane as a helical segment. Position 170 (Val-170) is a topological domain, periplasmic. Residues 171 to 191 (PLETASMMGMVVTLLIRLAAI) form a helical membrane-spanning segment. At 192–207 (RWHLKLPTFALDENGR) the chain is on the cytoplasmic side.

This sequence belongs to the UPF0126 family.

The protein localises to the cell inner membrane. The chain is UPF0126 inner membrane protein YadS (yadS) from Escherichia coli O6:H1 (strain CFT073 / ATCC 700928 / UPEC).